The sequence spans 477 residues: Bile acid transporter (477 aa).

A run of 15 helical transmembrane segments spans residues 13-33 (FVPF…TAVL), 50-70 (WISL…GKLG), 83-103 (IVIF…IFML), 107-127 (FIVG…IVTE), 139-159 (LYML…GLIM), 166-186 (VMMW…TFSI), 206-226 (LVVV…NIGW), 228-248 (STAF…LVMV), 272-292 (LILF…IVFV), 301-321 (IISS…SVII), 333-353 (VLTF…LFKA), 359-379 (IFAA…TIFM), 381-401 (VALS…YGLF), 406-426 (APFG…ANIA), and 444-464 (ISSI…GIIL).

The protein belongs to the major facilitator superfamily.

The protein resides in the cell membrane. The protein operates within lipid metabolism; bile acid degradation. This chain is Bile acid transporter (baiG), found in Clostridium scindens (strain JCM 10418 / VPI 12708).